A 556-amino-acid polypeptide reads, in one-letter code: Formate--tetrahydrofolate ligase (556 aa).

65–72 (TPAGEGKT) lines the ATP pocket.

This sequence belongs to the formate--tetrahydrofolate ligase family.

The catalysed reaction is (6S)-5,6,7,8-tetrahydrofolate + formate + ATP = (6R)-10-formyltetrahydrofolate + ADP + phosphate. The protein operates within one-carbon metabolism; tetrahydrofolate interconversion. The protein is Formate--tetrahydrofolate ligase of Clostridium cylindrosporum.